The sequence spans 150 residues: Putative HTH-type transcriptional regulator rrf2-like (150 aa).

An HTH rrf2-type domain is found at 1–139 (MITQKMKYAL…DSLTLEDMLA (139 aa)).

The polypeptide is Putative HTH-type transcriptional regulator rrf2-like (Rhodobacter capsulatus (strain ATCC BAA-309 / NBRC 16581 / SB1003)).